We begin with the raw amino-acid sequence, 207 residues long: Proteasome subunit beta 2 (207 aa).

Positions 1-13 are cleaved as a propeptide — removed in mature form; by autocatalysis; that stretch reads METNNKLKILKTG. The Nucleophile role is filled by T14.

Belongs to the peptidase T1B family. The 20S proteasome core is composed of 14 alpha and 14 beta subunits that assemble into four stacked heptameric rings, resulting in a barrel-shaped structure. The two inner rings, each composed of seven catalytic beta subunits, are sandwiched by two outer rings, each composed of seven alpha subunits. The catalytic chamber with the active sites is on the inside of the barrel. Has a gated structure, the ends of the cylinder being occluded by the N-termini of the alpha-subunits. Is capped at one or both ends by the proteasome regulatory ATPase, PAN.

It is found in the cytoplasm. The enzyme catalyses Cleavage of peptide bonds with very broad specificity.. The formation of the proteasomal ATPase PAN-20S proteasome complex, via the docking of the C-termini of PAN into the intersubunit pockets in the alpha-rings, triggers opening of the gate for substrate entry. Interconversion between the open-gate and close-gate conformations leads to a dynamic regulation of the 20S proteasome proteolysis activity. In terms of biological role, component of the proteasome core, a large protease complex with broad specificity involved in protein degradation. This Sulfurisphaera tokodaii (strain DSM 16993 / JCM 10545 / NBRC 100140 / 7) (Sulfolobus tokodaii) protein is Proteasome subunit beta 2.